The chain runs to 756 residues: ATP-dependent 6-phosphofructokinase 2 (756 aa).

An N-terminal catalytic PFK domain 1 region spans residues 1–393; that stretch reads MEQKFKKGKD…KQTYLNFVSI (393 aa). ATP contacts are provided by residues G20, 81-82, and 111-114; these read RC and GDGS. D112 contributes to the Mg(2+) binding site. Substrate is bound by residues 157–159, R194, 201–203, E257, R285, and 291–294; these read SID, MGR, and HLQR. D159 functions as the Proton acceptor in the catalytic mechanism. Residues 394-404 are interdomain linker; sequence PLSTTMPSRTK. A C-terminal regulatory PFK domain 2 region spans residues 405–756; that stretch reads TFAVVHIGSP…KKPQEAVLSS (352 aa). Residues R474, 530–534, 575–577, E632, R658, and 664–667 contribute to the beta-D-fructose 2,6-bisphosphate site; these read TISNN, MGS, and YSQL.

This sequence belongs to the phosphofructokinase type A (PFKA) family. ATP-dependent PFK group I subfamily. Eukaryotic two domain clade 'E' sub-subfamily. As to quaternary structure, homotetramer. It depends on Mg(2+) as a cofactor.

Its subcellular location is the cytoplasm. It carries out the reaction beta-D-fructose 6-phosphate + ATP = beta-D-fructose 1,6-bisphosphate + ADP + H(+). The protein operates within carbohydrate degradation; glycolysis; D-glyceraldehyde 3-phosphate and glycerone phosphate from D-glucose: step 3/4. Allosterically activated by ADP, AMP, or fructose 2,6-bisphosphate, and allosterically inhibited by ATP or citrate. Functionally, catalyzes the phosphorylation of D-fructose 6-phosphate to fructose 1,6-bisphosphate by ATP, the first committing step of glycolysis. This Caenorhabditis elegans protein is ATP-dependent 6-phosphofructokinase 2.